The sequence spans 465 residues: MTIHIYNTLTRQKEEFIPLEENKVKMYVCGPTVYNYIHIGNARPPMVFDTVRRYLEYKGYDVQYVSNFTDVDDKLIKAANELGEDVPTIADRFVEAYFEDVTALGCKHATVHPRVTENMDIIIEFIHELVNKGYAYESEGDVYFRTKEFEGYGKLSHQPIADLRHGARIEVGEKKQDPLDFALWKAAKEGEIFWESPWGQGRPGWHIECSAMARKYLGDTIDIHAGGQDLAFPHHENEIAQSEALTGKTFARYWMHNGYININNEKMSKSLGNFILVHDIIKQYDPQLIRFFMLSVHYRHPINFSEELLQSTNNGLERIKTAYGNLKHRMESSTDLTDHNEKWLADLEKFQTAFEEAMNDDFNTANAITELYNVANHANQYLLEEHTSTVVIEAYVKQLETLFDILGLELAQEELLDEEIEALIQKRIEARKNRDFALSDQIRDDLKDRNIILEDTAQGTRWKRG.

C29 serves as a coordination point for Zn(2+). Residues 31 to 41 (PTVYNYIHIGN) carry the 'HIGH' region motif. Residues C209, H234, and E238 each contribute to the Zn(2+) site. The short motif at 266-270 (KMSKS) is the 'KMSKS' region element. K269 is an ATP binding site. At S270 the chain carries Phosphoserine.

This sequence belongs to the class-I aminoacyl-tRNA synthetase family. As to quaternary structure, monomer. Zn(2+) is required as a cofactor.

It is found in the cytoplasm. It catalyses the reaction tRNA(Cys) + L-cysteine + ATP = L-cysteinyl-tRNA(Cys) + AMP + diphosphate. The protein is Cysteine--tRNA ligase of Bacillus thuringiensis (strain Al Hakam).